A 449-amino-acid polypeptide reads, in one-letter code: Probable glycine dehydrogenase (decarboxylating) subunit 1 (449 aa).

Belongs to the GcvP family. N-terminal subunit subfamily. In terms of assembly, the glycine cleavage system is composed of four proteins: P, T, L and H. In this organism, the P 'protein' is a heterodimer of two subunits.

The enzyme catalyses N(6)-[(R)-lipoyl]-L-lysyl-[glycine-cleavage complex H protein] + glycine + H(+) = N(6)-[(R)-S(8)-aminomethyldihydrolipoyl]-L-lysyl-[glycine-cleavage complex H protein] + CO2. Its function is as follows. The glycine cleavage system catalyzes the degradation of glycine. The P protein binds the alpha-amino group of glycine through its pyridoxal phosphate cofactor; CO(2) is released and the remaining methylamine moiety is then transferred to the lipoamide cofactor of the H protein. The protein is Probable glycine dehydrogenase (decarboxylating) subunit 1 of Pyrococcus horikoshii (strain ATCC 700860 / DSM 12428 / JCM 9974 / NBRC 100139 / OT-3).